The primary structure comprises 287 residues: Protease HtpX (287 aa).

The next 2 helical transmembrane spans lie at 4–24 (IFLLIATNLAVLLVASIVMSI) and 33–53 (GGLLVFAAIFGFGGAFISLAI). Position 139 (H139) interacts with Zn(2+). Residue E140 is part of the active site. Residue H143 coordinates Zn(2+). The next 2 membrane-spanning stretches (helical) occupy residues 154 to 174 (LIQGVVNTFVIFAARVVAGII) and 195 to 215 (AVVFVLDMLFGILASIIVAYF). Residue E220 participates in Zn(2+) binding.

The protein belongs to the peptidase M48B family. Zn(2+) serves as cofactor.

The protein localises to the cell inner membrane. This Shewanella putrefaciens (strain CN-32 / ATCC BAA-453) protein is Protease HtpX.